We begin with the raw amino-acid sequence, 142 residues long: Nucleoside diphosphate kinase (142 aa).

Lys11, Phe59, Arg87, Thr93, Arg104, and Asn114 together coordinate ATP. His117 (pros-phosphohistidine intermediate) is an active-site residue.

This sequence belongs to the NDK family. In terms of assembly, homotetramer. Mg(2+) is required as a cofactor.

Its subcellular location is the cytoplasm. It carries out the reaction a 2'-deoxyribonucleoside 5'-diphosphate + ATP = a 2'-deoxyribonucleoside 5'-triphosphate + ADP. It catalyses the reaction a ribonucleoside 5'-diphosphate + ATP = a ribonucleoside 5'-triphosphate + ADP. Its function is as follows. Major role in the synthesis of nucleoside triphosphates other than ATP. The ATP gamma phosphate is transferred to the NDP beta phosphate via a ping-pong mechanism, using a phosphorylated active-site intermediate. In Photobacterium profundum (strain SS9), this protein is Nucleoside diphosphate kinase.